We begin with the raw amino-acid sequence, 77 residues long: Dermatoxin-A1 (77 aa).

The first 22 residues, 1–22 (MAFLKKSLFLVLFLGLVPLFLC), serve as a signal peptide directing secretion. Residues 23 to 42 (ENEKREGENEKEENDDQSEE) constitute a propeptide that is removed on maturation. Residue glutamine 76 is modified to Glutamine amide.

Belongs to the frog skin active peptide (FSAP) family. Dermatoxin subfamily. As to expression, expressed by the skin glands.

The protein localises to the secreted. Functionally, possesses a potent antimicrobial activity against Gram-positive and Gram-negative bacteria. Probably acts by disturbing membrane functions with its amphipathic structure. This Agalychnis annae (Blue-sided leaf frog) protein is Dermatoxin-A1.